Here is a 358-residue protein sequence, read N- to C-terminus: Aminomethyltransferase (358 aa).

The protein belongs to the GcvT family. In terms of assembly, the glycine cleavage system is composed of four proteins: P, T, L and H.

It carries out the reaction N(6)-[(R)-S(8)-aminomethyldihydrolipoyl]-L-lysyl-[protein] + (6S)-5,6,7,8-tetrahydrofolate = N(6)-[(R)-dihydrolipoyl]-L-lysyl-[protein] + (6R)-5,10-methylene-5,6,7,8-tetrahydrofolate + NH4(+). Its function is as follows. The glycine cleavage system catalyzes the degradation of glycine. The chain is Aminomethyltransferase from Francisella tularensis subsp. holarctica (strain FTNF002-00 / FTA).